We begin with the raw amino-acid sequence, 272 residues long: 1,4-dihydroxy-2-naphthoyl-CoA synthase (272 aa).

Substrate-binding positions include R33, 72-76 (SGGDQ), Y84, 116-120 (YAIGG), T142, S148, Y245, and K260. 141–143 (QTG) contacts hydrogencarbonate.

Belongs to the enoyl-CoA hydratase/isomerase family. MenB subfamily. Hydrogencarbonate serves as cofactor.

It catalyses the reaction 2-succinylbenzoyl-CoA + H(+) = 1,4-dihydroxy-2-naphthoyl-CoA + H2O. The protein operates within quinol/quinone metabolism; 1,4-dihydroxy-2-naphthoate biosynthesis; 1,4-dihydroxy-2-naphthoate from chorismate: step 6/7. It functions in the pathway quinol/quinone metabolism; menaquinone biosynthesis. Functionally, converts o-succinylbenzoyl-CoA (OSB-CoA) to 1,4-dihydroxy-2-naphthoyl-CoA (DHNA-CoA). The protein is 1,4-dihydroxy-2-naphthoyl-CoA synthase of Staphylococcus epidermidis (strain ATCC 12228 / FDA PCI 1200).